The sequence spans 287 residues: Undecaprenyl-diphosphatase (287 aa).

Transmembrane regions (helical) follow at residues 6–26 (LYLIKAFFLGIIEGLTEFIPV), 45–65 (SGKVFEVVIQFGSILAVMWIF), 85–105 (AFTRNLLLAFLPAAVVGAIFI), 111–131 (VFYHPGVVAVTLVLGGLIMLW), 204–224 (ATEFSFFLAMPTMLGAATYDL), 238–258 (AIAVGFAAAFISALVVVRAVL), and 265–285 (TYRGFAWYRIALGIVVAAWLM).

The protein belongs to the UppP family.

It localises to the cell inner membrane. The catalysed reaction is di-trans,octa-cis-undecaprenyl diphosphate + H2O = di-trans,octa-cis-undecaprenyl phosphate + phosphate + H(+). Functionally, catalyzes the dephosphorylation of undecaprenyl diphosphate (UPP). Confers resistance to bacitracin. The sequence is that of Undecaprenyl-diphosphatase from Bordetella petrii (strain ATCC BAA-461 / DSM 12804 / CCUG 43448).